We begin with the raw amino-acid sequence, 345 residues long: MEFQLFSPYTIKDVTLKNRIIMSPMCMYSSENEDGQVTNFHLVHYGTRAAGQVGLVMIEATAVLPEGRISNKDLGIWDDNLIEGLHKTTTFIHNNGAKAAIQLAHAGRKAELETDAFAPSAIPFNDRMKIPVEMNKQQIKETVSAFQKAALRSKRAGVDVIELHGAHGYLINEFLSPLSNKRIDEYGGSPENRYRFLREIIDAVNEVWNGPLFVRISANDYHPDGLTVQDYVQYTGWMKEQGVDLIDCSSGAVVPAHIDVYPGYQVQYAKHIKEHVNIATGAVGLITTGSQAEQILNNNEADLIFIGRELLRNPYFPRIAANELGFELKEPYQYRRAPGKIKTNK.

23-26 (SPMC) contacts FMN. Tyrosine 28 contacts substrate. FMN contacts are provided by alanine 60 and glutamine 102. Position 164-167 (164-167 (HGAH)) interacts with substrate. FMN-binding positions include arginine 215 and 307-308 (GR).

The protein belongs to the NADH:flavin oxidoreductase/NADH oxidase family. NamA subfamily. In terms of assembly, homotetramer. Requires FMN as cofactor.

It carries out the reaction A + NADPH + H(+) = AH2 + NADP(+). In terms of biological role, catalyzes the reduction of the double bond of an array of alpha,beta-unsaturated aldehydes and ketones. It also reduces the nitro group of nitroester and nitroaromatic compounds. It could have a role in detoxification processes. The chain is NADPH dehydrogenase from Bacillus mycoides (strain KBAB4) (Bacillus weihenstephanensis).